The chain runs to 223 residues: Arginine kinase (223 aa).

The Phosphagen kinase C-terminal domain occupies 56 to 222 (FVISTRVRLI…LELIKIEKEM (167 aa)). Residues 59 to 63 (STRVR) and histidine 68 contribute to the ATP site. Position 141 (cysteine 141) interacts with L-arginine. ATP is bound by residues 150 to 154 (RASVH) and 175 to 180 (RGTRGE). Glutamate 180 contacts L-arginine.

Belongs to the ATP:guanido phosphotransferase family.

The enzyme catalyses L-arginine + ATP = N(omega)-phospho-L-arginine + ADP + H(+). This chain is Arginine kinase, found in Chionoecetes opilio (Atlantic snow crab).